The chain runs to 241 residues: Pyridoxine 5'-phosphate synthase (241 aa).

Residue asparagine 10 participates in 3-amino-2-oxopropyl phosphate binding. 12–13 (DH) is a 1-deoxy-D-xylulose 5-phosphate binding site. Arginine 21 contacts 3-amino-2-oxopropyl phosphate. Residue histidine 48 is the Proton acceptor of the active site. 1-deoxy-D-xylulose 5-phosphate-binding residues include arginine 50 and histidine 55. Glutamate 75 (proton acceptor) is an active-site residue. Threonine 105 is a 1-deoxy-D-xylulose 5-phosphate binding site. Residue histidine 195 is the Proton donor of the active site. Residues glycine 196 and 217 to 218 (GH) each bind 3-amino-2-oxopropyl phosphate.

Belongs to the PNP synthase family. Homooctamer; tetramer of dimers.

The protein resides in the cytoplasm. The catalysed reaction is 3-amino-2-oxopropyl phosphate + 1-deoxy-D-xylulose 5-phosphate = pyridoxine 5'-phosphate + phosphate + 2 H2O + H(+). The protein operates within cofactor biosynthesis; pyridoxine 5'-phosphate biosynthesis; pyridoxine 5'-phosphate from D-erythrose 4-phosphate: step 5/5. Catalyzes the complicated ring closure reaction between the two acyclic compounds 1-deoxy-D-xylulose-5-phosphate (DXP) and 3-amino-2-oxopropyl phosphate (1-amino-acetone-3-phosphate or AAP) to form pyridoxine 5'-phosphate (PNP) and inorganic phosphate. The polypeptide is Pyridoxine 5'-phosphate synthase (Bdellovibrio bacteriovorus (strain ATCC 15356 / DSM 50701 / NCIMB 9529 / HD100)).